A 620-amino-acid chain; its full sequence is Glutathione-regulated potassium-efflux system protein KefC (620 aa).

12 helical membrane-spanning segments follow: residues 4–24 (HTLLQALIYLGSAALIVPIAV), 26–46 (LGLGSVLGYLIAGCIIGPWGL), 54–74 (SILHFAEIGVVLMLFVIGLEL), 90–110 (GALQMVVCGGLIGLFCMFLGL), 114–134 (VAELIGMTLALSSTAIAMQAM), 149–169 (FAVLLFQDIAAIPLVAMIPLL), 178–198 (LGAFALSALKVAGALALVVLL), 218–238 (VFSAVALFLVFGFGLLLEEVG), 270–290 (GLLLGLFFIGVGMSIDFGTLV), 294–314 (LRILLLLAGFLAIKIVMLWLV), 327–347 (WFAVLLGQGSEFAFVVFGAAQ), and 359–379 (ALTLAVALSMAATPIFLVLLT). Positions 399 to 518 (QPRVIVAGFG…AGVAMPERET (120 aa)) constitute an RCK N-terminal domain. The interval 599–620 (QGTAEGKHSGEAADEPEVKPSI) is disordered.

The protein belongs to the monovalent cation:proton antiporter 2 (CPA2) transporter (TC 2.A.37) family. KefC subfamily. Homodimer. Interacts with the regulatory subunit KefF.

The protein localises to the cell inner membrane. In terms of biological role, pore-forming subunit of a potassium efflux system that confers protection against electrophiles. Catalyzes K(+)/H(+) antiport. The protein is Glutathione-regulated potassium-efflux system protein KefC of Salmonella dublin (strain CT_02021853).